Reading from the N-terminus, the 179-residue chain is Deoxyuridine 5'-triphosphate nucleotidohydrolase (179 aa).

Substrate contacts are provided by residues 90 to 92, Asn-103, 107 to 109, and Lys-117; these read RSG and TVD.

The protein belongs to the dUTPase family. It depends on Mg(2+) as a cofactor.

It catalyses the reaction dUTP + H2O = dUMP + diphosphate + H(+). Its pathway is pyrimidine metabolism; dUMP biosynthesis; dUMP from dCTP (dUTP route): step 2/2. Functionally, this enzyme is involved in nucleotide metabolism: it produces dUMP, the immediate precursor of thymidine nucleotides and it decreases the intracellular concentration of dUTP so that uracil cannot be incorporated into DNA. The sequence is that of Deoxyuridine 5'-triphosphate nucleotidohydrolase from Thermobifida fusca (strain YX).